A 333-amino-acid polypeptide reads, in one-letter code: tRNA N6-adenosine threonylcarbamoyltransferase (333 aa).

Positions 111 and 115 each coordinate Fe cation. Residues 134-138 (LVSGG), Asp-167, Gly-180, and Asn-272 contribute to the substrate site. Asp-300 contributes to the Fe cation binding site.

This sequence belongs to the KAE1 / TsaD family. Fe(2+) is required as a cofactor.

The protein resides in the cytoplasm. It carries out the reaction L-threonylcarbamoyladenylate + adenosine(37) in tRNA = N(6)-L-threonylcarbamoyladenosine(37) in tRNA + AMP + H(+). In terms of biological role, required for the formation of a threonylcarbamoyl group on adenosine at position 37 (t(6)A37) in tRNAs that read codons beginning with adenine. Is involved in the transfer of the threonylcarbamoyl moiety of threonylcarbamoyl-AMP (TC-AMP) to the N6 group of A37, together with TsaE and TsaB. TsaD likely plays a direct catalytic role in this reaction. The protein is tRNA N6-adenosine threonylcarbamoyltransferase of Hamiltonella defensa subsp. Acyrthosiphon pisum (strain 5AT).